Consider the following 84-residue polypeptide: Small ribosomal subunit protein bS20 (84 aa).

The interval 1–25 (MANIVSNEKTYRHTQKVRKENHAKM) is disordered.

This sequence belongs to the bacterial ribosomal protein bS20 family.

Binds directly to 16S ribosomal RNA. This is Small ribosomal subunit protein bS20 from Ureaplasma urealyticum serovar 10 (strain ATCC 33699 / Western).